The primary structure comprises 591 residues: Inactive metallocarboxypeptidase ECM14 (591 aa).

The N-terminal stretch at 1–21 (MRLFSHLAVLAILACAVPITA) is a signal peptide. A propeptide spanning residues 22-175 (IPSFLSNSYP…QTIYESYPSS (154 aa)) is cleaved from the precursor. The Peptidase M14 domain maps to 203 to 523 (DYQPFSVIVP…NAVMVLGRFL (321 aa)). The Zn(2+) site is built by histidine 265 and glutamate 268. Substrate is bound by residues 265–268 (HARE), arginine 323, and 340–341 (DR). Residues cysteine 334 and cysteine 357 are joined by a disulfide bond. Asparagine 350, asparagine 381, and asparagine 386 each carry an N-linked (GlcNAc...) asparagine glycan. Residue histidine 397 participates in Zn(2+) binding. A substrate-binding site is contributed by 398 to 399 (SY). Residues 533–591 (DWEDESQRPKADEDDIPSENELDENDDSWIPYDYRNHDDQNEGEGYDNDEWGFRRRRKR) are disordered. Composition is skewed to acidic residues over residues 544 to 559 (DEDD…ENDD) and 573 to 582 (NEGEGYDNDE).

The protein belongs to the peptidase M14 family. It depends on Zn(2+) as a cofactor.

It is found in the vacuole. The protein resides in the secreted. Its function is as follows. Inactive carboxypeptidase that may play a role in cell wall organization and biogenesis. The chain is Inactive metallocarboxypeptidase ECM14 (ECM14) from Paracoccidioides brasiliensis (strain Pb18).